The chain runs to 343 residues: Ribosomal RNA small subunit methyltransferase C (343 aa).

It belongs to the methyltransferase superfamily. RsmC family. Monomer.

The protein resides in the cytoplasm. It carries out the reaction guanosine(1207) in 16S rRNA + S-adenosyl-L-methionine = N(2)-methylguanosine(1207) in 16S rRNA + S-adenosyl-L-homocysteine + H(+). Specifically methylates the guanine in position 1207 of 16S rRNA in the 30S particle. The polypeptide is Ribosomal RNA small subunit methyltransferase C (Shigella boydii serotype 4 (strain Sb227)).